A 154-amino-acid polypeptide reads, in one-letter code: Crossover junction endodeoxyribonuclease RuvC (154 aa).

Residues Asp7, Glu67, and Asp139 contribute to the active site. 3 residues coordinate Mg(2+): Asp7, Glu67, and Asp139.

It belongs to the RuvC family. In terms of assembly, homodimer which binds Holliday junction (HJ) DNA. The HJ becomes 2-fold symmetrical on binding to RuvC with unstacked arms; it has a different conformation from HJ DNA in complex with RuvA. In the full resolvosome a probable DNA-RuvA(4)-RuvB(12)-RuvC(2) complex forms which resolves the HJ. It depends on Mg(2+) as a cofactor.

Its subcellular location is the cytoplasm. It catalyses the reaction Endonucleolytic cleavage at a junction such as a reciprocal single-stranded crossover between two homologous DNA duplexes (Holliday junction).. Functionally, the RuvA-RuvB-RuvC complex processes Holliday junction (HJ) DNA during genetic recombination and DNA repair. Endonuclease that resolves HJ intermediates. Cleaves cruciform DNA by making single-stranded nicks across the HJ at symmetrical positions within the homologous arms, yielding a 5'-phosphate and a 3'-hydroxyl group; requires a central core of homology in the junction. The consensus cleavage sequence is 5'-(A/T)TT(C/G)-3'. Cleavage occurs on the 3'-side of the TT dinucleotide at the point of strand exchange. HJ branch migration catalyzed by RuvA-RuvB allows RuvC to scan DNA until it finds its consensus sequence, where it cleaves and resolves the cruciform DNA. In Prochlorococcus marinus (strain MIT 9313), this protein is Crossover junction endodeoxyribonuclease RuvC.